Consider the following 1909-residue polypeptide: Nck-associated protein 5 (1909 aa).

Residues 71 to 253 (EKLIHELEEE…DLEQQNRTLS (183 aa)) adopt a coiled-coil conformation. Disordered regions lie at residues 351–370 (SSYT…SQNW), 736–819 (EEDT…LMEP), 855–997 (PLFE…KKPS), 1026–1469 (SSSF…APLS), 1486–1509 (KGQV…FASW), 1541–1592 (GFGN…RTPQ), 1725–1750 (FPLP…DAEP), and 1763–1885 (SMRA…DYGD). Over residues 736–748 (EEDTEKNIPKDNV) the composition is skewed to basic and acidic residues. 4 stretches are compositionally biased toward polar residues: residues 753 to 789 (RVST…SRSS), 950 to 965 (APSS…SETA), 981 to 990 (VISSNPATTE), and 1066 to 1084 (PRIS…SKSV). 2 stretches are compositionally biased toward low complexity: residues 1110–1131 (SPSS…HNSP) and 1178–1187 (ASKSSVAVNK). Positions 1241–1250 (DGRDGVDNRS) are enriched in basic and acidic residues. Positions 1300–1325 (QIITNTAERGNSLTRQNSSTESSPNK) are enriched in polar residues. The span at 1339-1366 (GRPSGHPSSGKGSLGSSGSFSSQHGSPS) shows a compositional bias: low complexity. A compositionally biased stretch (polar residues) spans 1428–1446 (PGRTQHPSTFETSSTSKLE). The span at 1454–1466 (ASATATDAVSSEA) shows a compositional bias: low complexity. Composition is skewed to basic and acidic residues over residues 1547–1560 (LKSE…KPEL) and 1567–1576 (ELIKDTKSAD). Over residues 1869 to 1878 (YSASGGSNSD) the composition is skewed to polar residues.

As to quaternary structure, interacts with the SH3-containing region of the adapter protein NCK. Expressed in fetal and adult brain, leukocytes and fetal fibroblasts.

This Homo sapiens (Human) protein is Nck-associated protein 5 (NCKAP5).